Here is a 306-residue protein sequence, read N- to C-terminus: Recombination-associated protein RdgC (306 aa).

Belongs to the RdgC family.

The protein resides in the cytoplasm. The protein localises to the nucleoid. Functionally, may be involved in recombination. This Pseudomonas syringae pv. tomato (strain ATCC BAA-871 / DC3000) protein is Recombination-associated protein RdgC.